A 758-amino-acid chain; its full sequence is Vitamin K-dependent gamma-carboxylase (758 aa).

Residues 1–34 (MAVSARPARAPRGPDKVKKDKAAQTSGPRQGSQM) are disordered. Position 2 is an N-acetylalanine (A2). Topologically, residues 2-60 (AVSARPARAPRGPDKVKKDKAAQTSGPRQGSQMGKLLGFEWTDVSSWERLVTLLNRPTD) are cytoplasmic. A compositionally biased stretch (basic and acidic residues) spans 12-22 (RGPDKVKKDKA). Residues 23–33 (AQTSGPRQGSQ) are compositionally biased toward polar residues. Residues 61–81 (PASLAVFRFLFGLMMVLDIPQ) traverse the membrane as a helical segment. At 82-113 (ERGLSSLDRRYLDGLEVCRFPLLDALQPLPLD) the chain is on the lumenal side. A disulfide bond links C99 and C450. The chain crosses the membrane as a helical span at residues 114–134 (WMYLVYTIMFLGALGMMLGLC). Residues 135-136 (YR) lie on the Cytoplasmic side of the membrane. The helical transmembrane segment at 137-157 (ISCVLFLLPYWYVFLLDKTSW) threads the bilayer. Residues 158 to 292 (NNHSYLYGLL…VSYFHCMNSQ (135 aa)) are Lumenal-facing. A helical membrane pass occupies residues 293-313 (LFSIGMFPYVMLASSPLFCSP). At 314–361 (EWPRKLVAHCPKKLQELLPLRTAPQPSTSCMYKRSRARGSQKPGLRHQ) the chain is on the cytoplasmic side. The helical transmembrane segment at 362 to 382 (LSTAFTLLYLLEQLFLPYSHF) threads the bilayer. Topologically, residues 383–758 (LTQGYNNWTN…PDSHPVHSEF (376 aa)) are lumenal. Residues 726-758 (RPFEPAGEPSPVNTDSSNPNPPEPDSHPVHSEF) are disordered. Positions 749 to 758 (PDSHPVHSEF) are enriched in basic and acidic residues.

The protein belongs to the vitamin K-dependent gamma-carboxylase family. In terms of assembly, monomer. May interact with CALU.

The protein resides in the endoplasmic reticulum membrane. The enzyme catalyses 4-carboxy-L-glutamyl-[protein] + 2,3-epoxyphylloquinone + H2O + H(+) = phylloquinol + L-glutamyl-[protein] + CO2 + O2. In terms of biological role, mediates the vitamin K-dependent carboxylation of glutamate residues to calcium-binding gamma-carboxyglutamate (Gla) residues with the concomitant conversion of the reduced hydroquinone form of vitamin K to vitamin K epoxide. Catalyzes gamma-carboxylation of various proteins, such as blood coagulation factors (F2, F7, F9 and F10), osteocalcin (BGLAP) or matrix Gla protein (MGP). The sequence is that of Vitamin K-dependent gamma-carboxylase (GGCX) from Ovis aries (Sheep).